Consider the following 989-residue polypeptide: Cellulose synthase A catalytic subunit 4 [UDP-forming] (989 aa).

Topologically, residues 1 to 184 are cytoplasmic; the sequence is MMESGVPPCA…SRIIPISKNK (184 aa). Residues C9, C12, C20, C23, C28, C31, C43, and C46 each contribute to the Zn(2+) site. The segment at 9 to 47 adopts an RING-type; degenerate zinc-finger fold; the sequence is CAACGDDAHAACRACSYALCKACLDEDAAEGRTTCARCG. Positions 138-149 are enriched in basic residues; sequence KKEKKASAKKAA. The tract at residues 138-158 is disordered; the sequence is KKEKKASAKKAAAKAQAPPVE. Residues 185–205 traverse the membrane as a helical segment; the sequence is LTPYRAVIIMRLVVLGLFFHY. Topologically, residues 206–213 are extracellular; sequence RITNPVYS. Residues 214–234 form a helical membrane-spanning segment; it reads AFGLWMTSVICEIWFGFSWIL. The Cytoplasmic segment spans residues 235 to 772; sequence DQFPKWCPIN…INTIVYPFTS (538 aa). Residues S272, K278, E279, and D308 each contribute to the UDP-alpha-D-glucose site. D308 is an active-site residue. A coiled-coil region spans residues 362-389; the sequence is VKERRAMKRDYEEYKVRINALVAKAQKT. K449 is a binding site for UDP-alpha-D-glucose. Residues K450 and D474 each coordinate Mn(2+). Residue D688 is part of the active site. Residues 773-793 traverse the membrane as a helical segment; it reads LPLIAYCCLPAICLLTGKFII. At 794–798 the chain is on the extracellular side; that stretch reads PTLSN. The chain crosses the membrane as a helical span at residues 799–819; sequence AATIWFLGLFISIIVTSVLEL. Topologically, residues 820-835 are cytoplasmic; that stretch reads RWSGIGIEDWWRNEQF. The chain crosses the membrane as a helical span at residues 836–856; it reads WVIGGVSAHLFAVFQGILKMI. Residues 857–884 are Extracellular-facing; the sequence is AGLDTNFTVTAKATDDTEFGELYVFKWT. N-linked (GlcNAc...) asparagine glycosylation is present at N862. Residues 885 to 905 traverse the membrane as a helical segment; it reads TVLIPPTSILVLNLVGVVAGF. Residues 906 to 916 lie on the Cytoplasmic side of the membrane; that stretch reads SDALNSGYESW. A helical transmembrane segment spans residues 917-937; it reads GPLFGKVFFAMWVIMHLYPFL. Residues 938 to 946 lie on the Extracellular side of the membrane; that stretch reads KGLMGRQNR. Residues 947-967 form a helical membrane-spanning segment; that stretch reads TPTIVVLWSVLLASVFSLLWV. The Cytoplasmic segment spans residues 968-989; it reads KIDPFIGSSETTTTNSCANFDC.

The protein belongs to the glycosyltransferase 2 family. Plant cellulose synthase subfamily. The cofactor is Mn(2+). It depends on Zn(2+) as a cofactor.

It is found in the cell membrane. It catalyses the reaction [(1-&gt;4)-beta-D-glucosyl](n) + UDP-alpha-D-glucose = [(1-&gt;4)-beta-D-glucosyl](n+1) + UDP + H(+). It functions in the pathway glycan metabolism; plant cellulose biosynthesis. In terms of biological role, catalytic subunit of cellulose synthase terminal complexes ('rosettes'), required for beta-1,4-glucan microfibril crystallization, a major mechanism of the cell wall formation. Involved in the secondary cell wall formation. The chain is Cellulose synthase A catalytic subunit 4 [UDP-forming] (CESA4) from Oryza sativa subsp. indica (Rice).